The chain runs to 676 residues: Methionine--tRNA ligase (676 aa).

The short motif at Pro-15–His-25 is the 'HIGH' region element. Zn(2+) is bound by residues Cys-146, Cys-149, Cys-159, and Cys-162. A 'KMSKS' region motif is present at residues Lys-332–Ser-336. Lys-335 is a binding site for ATP. Positions Asp-574 to Lys-676 constitute a tRNA-binding domain.

This sequence belongs to the class-I aminoacyl-tRNA synthetase family. MetG type 1 subfamily. As to quaternary structure, homodimer. Zn(2+) is required as a cofactor.

The protein localises to the cytoplasm. The enzyme catalyses tRNA(Met) + L-methionine + ATP = L-methionyl-tRNA(Met) + AMP + diphosphate. Its function is as follows. Is required not only for elongation of protein synthesis but also for the initiation of all mRNA translation through initiator tRNA(fMet) aminoacylation. The chain is Methionine--tRNA ligase from Erwinia tasmaniensis (strain DSM 17950 / CFBP 7177 / CIP 109463 / NCPPB 4357 / Et1/99).